A 124-amino-acid polypeptide reads, in one-letter code: Desulfoferrodoxin homolog (124 aa).

Positions 10, 13, 29, 30, 49, 69, 75, 117, and 120 each coordinate Fe cation.

It belongs to the desulfoferrodoxin family. Fe(3+) is required as a cofactor. The cofactor is Cu(2+).

This is Desulfoferrodoxin homolog from Methanothermobacter thermautotrophicus (strain ATCC 29096 / DSM 1053 / JCM 10044 / NBRC 100330 / Delta H) (Methanobacterium thermoautotrophicum).